The chain runs to 365 residues: Outer capsid protein sigma-3 (365 aa).

Residues Cys-51 to Cys-73 form a CCHC-type zinc finger.

It belongs to the orthoreovirus sigma-3 protein family. As to quaternary structure, heterohexamer of three sigma-3 and three Mu-1 proteins. The RNA-binding form is probably a homodimer. Post-translationally, cleaved during virus the endosomal proteolytic disassembly of the outer capsid.

It localises to the virion. Stimulates translation by blocking the activation of the dsRNA-dependent protein kinase EIF2AK2/PKR, thereby inhibiting the host interferon response. Sigma3 prevents the activation of EIF2AK2 by competing with the kinase for dsRNA-binding. In terms of biological role, the viral outer shell polypeptides, of which sigma-3 is one, impose structural constraints that prevent elongation of nascent transcripts by the RNA-dependent RNA polymerase lambda-3. The chain is Outer capsid protein sigma-3 (S4) from Mammalia (T1L).